A 349-amino-acid polypeptide reads, in one-letter code: Nicotinate-nucleotide--dimethylbenzimidazole phosphoribosyltransferase (349 aa).

A disordered region spans residues 1 to 20; that stretch reads MEFATVSPPDPGTAAAARAR. Glu313 serves as the catalytic Proton acceptor.

Belongs to the CobT family.

It carries out the reaction 5,6-dimethylbenzimidazole + nicotinate beta-D-ribonucleotide = alpha-ribazole 5'-phosphate + nicotinate + H(+). It participates in nucleoside biosynthesis; alpha-ribazole biosynthesis; alpha-ribazole from 5,6-dimethylbenzimidazole: step 1/2. Its function is as follows. Catalyzes the synthesis of alpha-ribazole-5'-phosphate from nicotinate mononucleotide (NAMN) and 5,6-dimethylbenzimidazole (DMB). The sequence is that of Nicotinate-nucleotide--dimethylbenzimidazole phosphoribosyltransferase from Mycolicibacterium paratuberculosis (strain ATCC BAA-968 / K-10) (Mycobacterium paratuberculosis).